The following is a 328-amino-acid chain: Pancreas transcription factor 1 subunit alpha (328 aa).

Residues Gln-163–Leu-215 enclose the bHLH domain. Disordered regions lie at residues Arg-259–Gly-278 and Asp-305–Ser-328.

As to quaternary structure, component of the pancreas transcription factor 1 complex (PTF1) which is composed of TCF3/p75, TCF12/p64 and PTF1A/p48. TCF3 is responsible for the nuclear import of the p48/p64 complex. Interacts with TCF3 and RBPSUH/RBP-Jkappa. In terms of tissue distribution, pancreas-specific (at protein level). Loss of expression is seen in ductal type pancreas cancers.

The protein localises to the nucleus. Its subcellular location is the cytoplasm. In terms of biological role, transcription factor implicated in the cell fate determination in various organs. Binds to the E-box consensus sequence 5'-CANNTG-3'. Plays a role in early and late pancreas development and differentiation. Important for determining whether cells allocated to the pancreatic buds continue towards pancreatic organogenesis or revert back to duodenal fates. May be involved in the maintenance of exocrine pancreas-specific gene expression including ELA1 and amylase. Required for the formation of pancreatic acinar and ductal cells. Plays an important role in cerebellar development. Directly regulated by FOXN4 and RORC during retinal development, FOXN4-PTF1A pathway plays a central role in directing the differentiation of retinal progenitors towards horizontal and amacrine fates. This is Pancreas transcription factor 1 subunit alpha (PTF1A) from Homo sapiens (Human).